The sequence spans 448 residues: Phosphoglucosamine mutase (448 aa).

The active-site Phosphoserine intermediate is Ser100. Residues Ser100, Asp240, Asp242, and Asp244 each coordinate Mg(2+). At Ser100 the chain carries Phosphoserine.

The protein belongs to the phosphohexose mutase family. Mg(2+) serves as cofactor. Post-translationally, activated by phosphorylation.

The catalysed reaction is alpha-D-glucosamine 1-phosphate = D-glucosamine 6-phosphate. Functionally, catalyzes the conversion of glucosamine-6-phosphate to glucosamine-1-phosphate. In Geobacillus thermodenitrificans (strain NG80-2), this protein is Phosphoglucosamine mutase.